A 3095-amino-acid chain; its full sequence is Centrosome-associated protein 350 (3095 aa).

Disordered regions lie at residues 1-24 (MRSS…ETIQ) and 63-105 (TKKS…RSPL). The segment covering 14-24 (PRNSQSKETIQ) has biased composition (polar residues). 2 positions are modified to phosphoserine: serine 84 and serine 140. 3 disordered regions span residues 219–239 (DEMP…LNNM), 251–272 (SDSS…KRQQ), and 430–493 (KILG…RAWS). A compositionally biased stretch (polar residues) spans 228-238 (SENNSKPSLNN). The span at 251 to 265 (SDSSPSSSACNSQRS) shows a compositional bias: low complexity. Composition is skewed to basic and acidic residues over residues 438–457 (MEQK…ERVA) and 464–476 (GRAE…DVSH). Serine 468 bears the Phosphoserine mark. Residues 481–491 (RSSARSRSSRA) are compositionally biased toward low complexity. Serine 503 carries the post-translational modification Phosphoserine. Disordered regions lie at residues 538 to 623 (QAVR…QKNK) and 671 to 718 (ARQH…PPQP). 2 stretches are compositionally biased toward basic and acidic residues: residues 587 to 623 (YDTD…QKNK) and 690 to 699 (ESDKENKIQE). Positions 596–641 (IVRQQEERRRRQHEEKKAQKEATEQKNKRLQELYRRQREAFSKAKT) form a coiled coil. Residue serine 691 is modified to Phosphoserine. The span at 701-714 (PPSASSSSDLSLSE) shows a compositional bias: low complexity. A phosphoserine mark is found at serine 874 and serine 935. Positions 977 to 996 (SVSEGPLLSEGSLSEEEERR) are disordered. Over residues 979–988 (SEGPLLSEGS) the composition is skewed to low complexity. Phosphoserine is present on serine 1057. 2 disordered regions span residues 1099–1128 (YEDD…GSSL) and 1151–1265 (QHSS…SQKL). Residues 1119 to 1128 (LESQVDGSSL) show a composition bias toward polar residues. A compositionally biased stretch (low complexity) spans 1153 to 1168 (SSGARSAGSTRSSSAS). Positions 1194 to 1206 (DEEKVQSDSERGS) are enriched in basic and acidic residues. Phosphoserine is present on serine 1200. The segment covering 1251–1265 (QKTPTSPLSPSSQKL) has biased composition (low complexity). Threonine 1253 bears the Phosphothreonine mark. 2 positions are modified to phosphoserine: serine 1256 and serine 1259. Positions 1363-1402 (IKAQQQRHERDLALLKLKAEQEALECQRQLEETRNKTAQV) form a coiled coil. Disordered regions lie at residues 1490–1668 (AETD…GQDS), 1720–1739 (LRDK…QRGL), 1787–1864 (KLKS…QRRQ), and 1893–2017 (AWDK…PVKS). Basic and acidic residues predominate over residues 1503–1513 (QSKEGAVDSKR). Low complexity-rich tracts occupy residues 1517–1526 (SPSRDSYSES) and 1536–1545 (SSGSSRQDSP). Basic and acidic residues predominate over residues 1551-1564 (KENEKPFHGEKMES). Serine 1606 carries the post-translational modification Phosphoserine. Residues 1624-1640 (ESHRRFNMEKKRGHHDD) show a composition bias toward basic and acidic residues. A phosphoserine mark is found at serine 1641 and serine 1646. Positions 1700–1793 (KALKEKTKAE…LQEKLKSAGE (94 aa)) form a coiled coil. The segment covering 1787-1796 (KLKSAGEKKL) has biased composition (basic and acidic residues). Phosphoserine is present on serine 1812. Positions 1819 to 1835 (ETRSPSPISISSSETSS) are enriched in low complexity. 2 stretches are compositionally biased toward basic and acidic residues: residues 1845 to 1864 (SRMD…QRRQ) and 1894 to 1915 (WDKE…RTEQ). Residues 1850-1893 (KFLTKREQKLMQRRQHAEELLEWKRRLDAEEAEIQQMEKQALAA) adopt a coiled-coil conformation. A Phosphoserine modification is found at serine 1930. Over residues 1980-1994 (STSPSKHSPPKSCLS) the composition is skewed to low complexity. Residues 1999 to 2011 (ESSKASHRTEGHC) show a composition bias toward basic and acidic residues. Positions 2043 to 2092 (IEGRIRALKDELRKRKSVVEQLKREQRKRQKERLKAQEASLLRQLETYDE) form a coiled coil. Serine 2108 bears the Phosphoserine mark. 4 disordered regions span residues 2116–2155 (KTLS…GSLA), 2191–2265 (IEHL…VEDA), 2286–2427 (LSSK…EISE), and 2440–2471 (VHSE…GGTE). The span at 2133 to 2151 (HRSETAKTWKSVTESERSR) shows a compositional bias: basic and acidic residues. The residue at position 2198 (serine 2198) is a Phosphoserine. Composition is skewed to basic and acidic residues over residues 2202 to 2214 (SSRK…RDSL) and 2227 to 2259 (NAPD…KLES). Residues 2286–2300 (LSSKELPSDSANVQQ) are compositionally biased toward polar residues. Residues 2301 to 2331 (DLDKPATETSHEKEEALKEDQSNHSTDDRSP) are compositionally biased toward basic and acidic residues. Over residues 2349–2362 (DSTCSGQLSVPKES) the composition is skewed to polar residues. Basic and acidic residues-rich tracts occupy residues 2377 to 2387 (ISADEISKDDS) and 2395 to 2407 (LRKD…DRSQ). Low complexity predominate over residues 2409-2420 (TRSSRSRATGSG). Serine 2421 and serine 2450 each carry phosphoserine. A compositionally biased stretch (basic and acidic residues) spans 2455 to 2465 (MKSKERSDVGH). The CAP-Gly domain maps to 2504 to 2546 (GETDFAKGFWAGVELDKPEGNNNGTYDGIVYFVCKDKHGIFAP). At threonine 2671 the chain carries Phosphothreonine. Positions 2700–2731 (LLDLLTREKNQLEAQLKSSISEEKKSKQQLET) form a coiled coil. Positions 2767-2793 (QEFLDQKKVPPQDLPQNTEEQSPSVPS) are disordered. Polar residues predominate over residues 2780 to 2791 (LPQNTEEQSPSV). Residues serine 2809 and serine 2818 each carry the phosphoserine modification.

Part of a ternary complex that contains CEP350, CEP43 and MAPRE1. Interacts (via C-terminus) directly with CEP43 (via N-terminus). Interacts with NR1H3, PPARA, PPARD and PPARG. Interacts directly with microtubules. Interacts with the fusion protein CEP43-FGFR1, and by doing so recruits and activates PI3K and PLC-gamma. Interacts with CYLD. Interacts with CFAP157. Interacts with CEP19 (via C-terminus). Interacts with CEP78; promoting CEP78 localization to centrosome and centriole. Post-translationally, phosphorylated during mitosis.

The protein resides in the cytoplasm. It localises to the cytoskeleton. It is found in the microtubule organizing center. The protein localises to the centrosome. Its subcellular location is the spindle. The protein resides in the nucleus. It localises to the centriole. It is found in the cilium basal body. Its function is as follows. Plays an essential role in centriole growth by stabilizing a procentriolar seed composed of at least, SASS6 and CPAP. Required for anchoring microtubules to the centrosomes and for the integrity of the microtubule network. Recruits PPARA to discrete subcellular compartments and thereby modulates PPARA activity. Required for ciliation. In Mus musculus (Mouse), this protein is Centrosome-associated protein 350.